A 237-amino-acid chain; its full sequence is Orotidine 5'-phosphate decarboxylase (237 aa).

Residues aspartate 10, lysine 32, 59–68 (DLKLHDIPNT), threonine 118, arginine 180, glutamine 189, glycine 209, and arginine 210 contribute to the substrate site. The active-site Proton donor is lysine 61.

The protein belongs to the OMP decarboxylase family. Type 1 subfamily. Homodimer.

It carries out the reaction orotidine 5'-phosphate + H(+) = UMP + CO2. Its pathway is pyrimidine metabolism; UMP biosynthesis via de novo pathway; UMP from orotate: step 2/2. Its function is as follows. Catalyzes the decarboxylation of orotidine 5'-monophosphate (OMP) to uridine 5'-monophosphate (UMP). The chain is Orotidine 5'-phosphate decarboxylase from Fusobacterium nucleatum subsp. nucleatum (strain ATCC 25586 / DSM 15643 / BCRC 10681 / CIP 101130 / JCM 8532 / KCTC 2640 / LMG 13131 / VPI 4355).